The primary structure comprises 111 residues: Large ribosomal subunit protein uL24 (111 aa).

It belongs to the universal ribosomal protein uL24 family. In terms of assembly, part of the 50S ribosomal subunit.

One of two assembly initiator proteins, it binds directly to the 5'-end of the 23S rRNA, where it nucleates assembly of the 50S subunit. Functionally, one of the proteins that surrounds the polypeptide exit tunnel on the outside of the subunit. The protein is Large ribosomal subunit protein uL24 of Bifidobacterium animalis subsp. lactis (strain AD011).